We begin with the raw amino-acid sequence, 322 residues long: Peptidase 1 (322 aa).

An N-terminal signal peptide occupies residues 1-18 (MKFVLAIASLLVLSVVYA). A propeptide spanning residues 19-99 (YPSEIRTFEE…LKKEFDLDAG (81 aa)) is cleaved from the precursor. Cys131 and Cys171 form a disulfide bridge. The active site involves Cys134. N-linked (GlcNAc...) asparagine glycosylation is present at Asn152. Active-site residues include His270 and Asn290.

This sequence belongs to the peptidase C1 family. As to expression, expressed in the gut.

The protein localises to the secreted. It catalyses the reaction Broad endopeptidase specificity.. In terms of biological role, probable thiol protease. This Psoroptes ovis (Sheep scab mite) protein is Peptidase 1.